A 687-amino-acid chain; its full sequence is Mitochondrial 15S rRNA processing factor ppr3 (687 aa).

The transit peptide at 1–49 directs the protein to the mitochondrion; that stretch reads MLNKCSGSLTLLAVRRFCGPCRRLHYHKDNPNNINIAKNLLNNNIQARC. 4 PPR repeats span residues 262–296, 297–331, 334–368, and 372–407; these read NGLV…SITP, SKDF…ATSI, SAET…PIDP, and TTFV…GLRP.

Belongs to the CCM1 family. As to quaternary structure, binds to mitochondrial small subunit 15S rRNA.

The protein localises to the mitochondrion. Functionally, regulates mitochondrial small subunit maturation by controlling 15S rRNA 5'-end processing. Localizes to the 5' precursor of the 15S rRNA in a position that is subsequently occupied by mS47 in the mature yeast mtSSU. Uses structure and sequence-specific RNA recognition, binding to a single-stranded region of the precursor and specifically recognizing bases -6 to -1. The exchange of Ccm1 for mS47 is coupled to the irreversible removal of precursor rRNA that is accompanied by conformational changes of the mitoribosomal proteins uS5m and mS26. These conformational changes signal completion of 5'-end rRNA processing through protection of the mature 5'-end of the 15S rRNA and stabilization of mS47. The removal of the 5' precursor together with the dissociation of Ccm1 may be catalyzed by the 5'-3' exoribonuclease Pet127. Involved in the specific removal of group I introns in mitochondrial encoded transcripts. The chain is Mitochondrial 15S rRNA processing factor ppr3 from Schizosaccharomyces pombe (strain 972 / ATCC 24843) (Fission yeast).